Consider the following 529-residue polypeptide: RE1-silencing transcription factor B (529 aa).

The C2H2-type 1 zinc finger occupies 156–178 (FRCKPCQYKAESEEEFVHHIKIH). Positions 188 to 210 (SNKKAQGNEADSSISEESDVSKG) are disordered. 7 consecutive C2H2-type zinc fingers follow at residues 212–234 (IQCD…LKHH), 244–266 (YKCT…LRNH), 272–294 (YTCS…IRTH), 300–322 (YQCI…MRTH), 328–351 (FKCE…RQVH), 357–379 (LTCP…VELH), and 385–408 (FLCP…KSRH). Residues 484–529 (LSSTQKKIKTSDARPEKILDKSRKSSCVKRKSDLLENSNDTQTSTV) are disordered. A compositionally biased stretch (basic and acidic residues) spans 492–506 (KTSDARPEKILDKSR). Over residues 518-529 (LENSNDTQTSTV) the composition is skewed to polar residues.

It is found in the nucleus. The protein resides in the cytoplasm. Transcriptional repressor which binds neuron-restrictive silencer element (NRSE) and represses neuronal gene transcription in non-neuronal cells. Plays a role in the early development of the nervous system and is required for proper patterning of the neuroectoderm during gastrulation. This involves the correct speciation of the neuroepithelial domain and adequate development of the non-neural ectoderm. The sequence is that of RE1-silencing transcription factor B (rest-b) from Xenopus laevis (African clawed frog).